The primary structure comprises 153 residues: Endoribonuclease YbeY (153 aa).

Residues His-114, His-118, and His-124 each coordinate Zn(2+).

This sequence belongs to the endoribonuclease YbeY family. The cofactor is Zn(2+).

Its subcellular location is the cytoplasm. Its function is as follows. Single strand-specific metallo-endoribonuclease involved in late-stage 70S ribosome quality control and in maturation of the 3' terminus of the 16S rRNA. This chain is Endoribonuclease YbeY, found in Shewanella baltica (strain OS223).